We begin with the raw amino-acid sequence, 103 residues long: Large ribosomal subunit protein bL21 (103 aa).

This sequence belongs to the bacterial ribosomal protein bL21 family. Part of the 50S ribosomal subunit. Contacts protein L20.

Functionally, this protein binds to 23S rRNA in the presence of protein L20. This chain is Large ribosomal subunit protein bL21, found in Amoebophilus asiaticus (strain 5a2).